Consider the following 926-residue polypeptide: OTU domain-containing protein 7A (926 aa).

A disordered region spans residues 75–99 (PHVFNEGRGPKQPEREPQPGHKVER). The span at 82 to 99 (RGPKQPEREPQPGHKVER) shows a compositional bias: basic and acidic residues. Ser-119 is modified (phosphoserine). Residues 168–410 (ERDLIEQATM…AVDPGKDWEW (243 aa)) are TRAF-binding. Residues 183-449 (AGRLNWWSTV…VTWIRIPSET (267 aa)) are catalytic. An OTU domain is found at 199–374 (LLPLATTGDG…QAHFSALVSM (176 aa)). Asp-207 is an active-site residue. Cys-210 (nucleophile) is an active-site residue. His-367 acts as the Proton acceptor in catalysis. Disordered stretches follow at residues 452-514 (PLAQ…DSVA), 537-613 (GLVH…DAWK), and 668-768 (EQEQ…APAR). A compositionally biased stretch (low complexity) spans 481-491 (VCSNSNSNNGK). Positions 492–510 (NGKDKEKEKQRKEKDKTRA) are enriched in basic and acidic residues. Residues 494–509 (KDKEKEKQRKEKDKTR) carry the Nuclear localization signal motif. Composition is skewed to low complexity over residues 576–592 (GASA…PSPT), 677–691 (ATAA…AATA), and 729–742 (PAAG…AGGT). Arg-880 bears the Omega-N-methylarginine mark. The segment at 884 to 919 (GPVQRRCQRENCAFYGRAETEHYCSYCYREELRRRR) adopts an A20-type zinc-finger fold. Positions 890, 895, 907, and 910 each coordinate Zn(2+).

Belongs to the peptidase C64 family.

The protein resides in the cytoplasm. Its subcellular location is the nucleus. The enzyme catalyses Thiol-dependent hydrolysis of ester, thioester, amide, peptide and isopeptide bonds formed by the C-terminal Gly of ubiquitin (a 76-residue protein attached to proteins as an intracellular targeting signal).. Deubiquitinase, which cleaves 'Lys-11'-linked polyubiquitin chains. Might be required for PA28-20S proteasome assembly. The polypeptide is OTU domain-containing protein 7A (OTUD7A) (Homo sapiens (Human)).